The following is a 172-amino-acid chain: Large ribosomal subunit protein uL10 (172 aa).

It belongs to the universal ribosomal protein uL10 family. In terms of assembly, part of the ribosomal stalk of the 50S ribosomal subunit. The N-terminus interacts with L11 and the large rRNA to form the base of the stalk. The C-terminus forms an elongated spine to which L12 dimers bind in a sequential fashion forming a multimeric L10(L12)X complex.

Its function is as follows. Forms part of the ribosomal stalk, playing a central role in the interaction of the ribosome with GTP-bound translation factors. This chain is Large ribosomal subunit protein uL10, found in Francisella tularensis subsp. mediasiatica (strain FSC147).